A 299-amino-acid chain; its full sequence is Methionine aminopeptidase (299 aa).

His-64 provides a ligand contact to substrate. 3 residues coordinate a divalent metal cation: Asp-84, Asp-95, and His-158. His-166 provides a ligand contact to substrate. 2 residues coordinate a divalent metal cation: Glu-191 and Glu-284.

The protein belongs to the peptidase M24A family. Methionine aminopeptidase archaeal type 2 subfamily. In terms of assembly, monomer. Requires Co(2+) as cofactor. The cofactor is Zn(2+). Mn(2+) serves as cofactor. Fe(2+) is required as a cofactor.

The catalysed reaction is Release of N-terminal amino acids, preferentially methionine, from peptides and arylamides.. Functionally, removes the N-terminal methionine from nascent proteins. The N-terminal methionine is often cleaved when the second residue in the primary sequence is small and uncharged (Met-Ala-, Cys, Gly, Pro, Ser, Thr, or Val). In Methanothermobacter thermautotrophicus (strain ATCC 29096 / DSM 1053 / JCM 10044 / NBRC 100330 / Delta H) (Methanobacterium thermoautotrophicum), this protein is Methionine aminopeptidase.